Consider the following 369-residue polypeptide: DNA replication and repair protein RecF (369 aa).

30-37 (GRNAQGKT) contacts ATP.

It belongs to the RecF family.

It is found in the cytoplasm. Functionally, the RecF protein is involved in DNA metabolism; it is required for DNA replication and normal SOS inducibility. RecF binds preferentially to single-stranded, linear DNA. It also seems to bind ATP. The chain is DNA replication and repair protein RecF from Streptococcus agalactiae serotype III (strain NEM316).